The sequence spans 434 residues: Mitochondrial distribution and morphology protein 12 (434 aa).

In terms of domain architecture, SMP-LTD spans 1–434 (MSIDIDWERA…VYPSFWTFLV (434 aa)). The span at 70–83 (YEEDDNENFSESSE) shows a compositional bias: acidic residues. 2 disordered regions span residues 70–141 (YEED…LRSP) and 181–275 (TPLG…DDLP). Basic and acidic residues predominate over residues 86–97 (SPTREPVDRYGS). Positions 215-237 (SAQSRPSTANTGNTLLSRGSMSS) are enriched in polar residues.

Belongs to the MDM12 family. Component of the ER-mitochondria encounter structure (ERMES) or MDM complex, composed of MMM1, MDM10, MDM12 and MDM34. An MMM1 homodimer associates with one molecule of MDM12 on each side in a pairwise head-to-tail manner, and the SMP-LTD domains of MMM1 and MDM12 generate a continuous hydrophobic tunnel for phospholipid trafficking.

Its subcellular location is the mitochondrion outer membrane. It localises to the endoplasmic reticulum membrane. Functionally, component of the ERMES/MDM complex, which serves as a molecular tether to connect the endoplasmic reticulum (ER) and mitochondria. Components of this complex are involved in the control of mitochondrial shape and protein biogenesis, and function in nonvesicular lipid trafficking between the ER and mitochondria. MDM12 is required for the interaction of the ER-resident membrane protein MMM1 and the outer mitochondrial membrane-resident beta-barrel protein MDM10. The MDM12-MMM1 subcomplex functions in the major beta-barrel assembly pathway that is responsible for biogenesis of all mitochondrial outer membrane beta-barrel proteins, and acts in a late step after the SAM complex. The MDM10-MDM12-MMM1 subcomplex further acts in the TOM40-specific pathway after the action of the MDM12-MMM1 complex. Essential for establishing and maintaining the structure of mitochondria and maintenance of mtDNA nucleoids. This is Mitochondrial distribution and morphology protein 12 from Blastomyces gilchristii (strain SLH14081) (Blastomyces dermatitidis).